The chain runs to 289 residues: 4-diphosphocytidyl-2-C-methyl-D-erythritol kinase (289 aa).

K13 is an active-site residue. Position 101–111 (P101–S111) interacts with ATP. D143 is an active-site residue.

This sequence belongs to the GHMP kinase family. IspE subfamily.

The enzyme catalyses 4-CDP-2-C-methyl-D-erythritol + ATP = 4-CDP-2-C-methyl-D-erythritol 2-phosphate + ADP + H(+). It participates in isoprenoid biosynthesis; isopentenyl diphosphate biosynthesis via DXP pathway; isopentenyl diphosphate from 1-deoxy-D-xylulose 5-phosphate: step 3/6. Functionally, catalyzes the phosphorylation of the position 2 hydroxy group of 4-diphosphocytidyl-2C-methyl-D-erythritol. The chain is 4-diphosphocytidyl-2-C-methyl-D-erythritol kinase from Janthinobacterium sp. (strain Marseille) (Minibacterium massiliensis).